The chain runs to 249 residues: Ribonuclease 3 (249 aa).

Residues 20–149 (FKEFQERISV…FIGALYLDQG (130 aa)) enclose the RNase III domain. Glutamate 62 contributes to the Mg(2+) binding site. Aspartate 66 is an active-site residue. Residues aspartate 135 and glutamate 138 each contribute to the Mg(2+) site. The active site involves glutamate 138. The DRBM domain occupies 175–244 (DFKSQLQEFV…AQEALAKMQK (70 aa)). Positions 223–249 (NGRSKKEAEQHAAQEALAKMQKHHTKQ) are disordered.

The protein belongs to the ribonuclease III family. Homodimer. Mg(2+) is required as a cofactor.

It is found in the cytoplasm. It carries out the reaction Endonucleolytic cleavage to 5'-phosphomonoester.. In terms of biological role, digests double-stranded RNA. Involved in the processing of primary rRNA transcript to yield the immediate precursors to the large and small rRNAs (23S and 16S). Processes some mRNAs, and tRNAs when they are encoded in the rRNA operon. Processes pre-crRNA and tracrRNA of type II CRISPR loci if present in the organism. The protein is Ribonuclease 3 of Bacillus velezensis (strain DSM 23117 / BGSC 10A6 / LMG 26770 / FZB42) (Bacillus amyloliquefaciens subsp. plantarum).